The following is a 360-amino-acid chain: POU domain, class 5, transcription factor 1 (360 aa).

Disordered regions lie at residues 1 to 53 (MAGH…GVGP) and 87 to 117 (QGGLETSQPEGEAGAGVESNSDGASPEPCTV). The 9aaTAD motif lies at 4 to 12 (HLASDFAFS). The segment covering 17–26 (GGGDGPGGPE) has biased composition (gly residues). At serine 111 the chain carries Phosphoserine; by MAPK. Residue lysine 123 forms a Glycyl lysine isopeptide (Lys-Gly) (interchain with G-Cter in SUMO) linkage. A POU-specific domain is found at 138-212 (DIKALQKELE…LLQKWVEEAD (75 aa)). DNA is bound by residues arginine 157 and glutamine 164. 2 DNA-binding regions span residues 180 to 186 (SQTTICR) and 193 to 196 (SFKN). Positions 230–289 (RKRKRTSIENRVRGSLENLFLQCPKPTLQQISHIAQQLGLEKDVVRVWFCNRRQKGKRSS) form a DNA-binding region, homeobox. Threonine 235 is subject to Phosphothreonine. Phosphoserine occurs at positions 236, 289, 290, and 355.

It belongs to the POU transcription factor family. Class-5 subfamily. Interacts with PKM. Interacts with WWP2. Interacts with UBE2I and ZSCAN10. Interacts with PCGF1. Interacts with ESRRB; recruits ESRRB near the POU5F1-SOX2 element in the NANOG proximal promoter; the interaction is DNA independent. Interacts with ZNF322. Interacts with MAPK8 and MAPK9; the interaction allows MAPK8 and MAPK9 to phosphorylate POU5F1 on Ser-355. Interacts (when phosphorylated on Ser-355) with FBXW8. Interacts with FBXW4. Interacts with SOX2 and SOX15; binds synergistically with either SOX2 or SOX15 to DNA. Interacts with DDX56. Post-translationally, sumoylation enhances the protein stability, DNA binding and transactivation activity. Sumoylation is required for enhanced YES1 expression. In terms of processing, ubiquitinated; undergoes 'Lys-63'-linked polyubiquitination by WWP2 leading to proteasomal degradation. ERK1/2-mediated phosphorylation at Ser-111 promotes nuclear exclusion and proteasomal degradation. Phosphorylation at Thr-235 and Ser-236 decrease DNA-binding and alters ability to activate transcription.

Its subcellular location is the cytoplasm. It is found in the nucleus. Transcription factor that binds to the octamer motif (5'-ATTTGCAT-3'). Forms a trimeric complex with SOX2 or SOX15 on DNA and controls the expression of a number of genes involved in embryonic development such as YES1, FGF4, UTF1 and ZFP206. Critical for early embryogenesis and for embryonic stem cell pluripotency. In Macaca mulatta (Rhesus macaque), this protein is POU domain, class 5, transcription factor 1 (POU5F1).